The primary structure comprises 152 residues: MSEKYVVTWDMLQIHARKLAQRLLPADQWKGIIAVSRGGLVPSALLARELGIRHVDTVCISSYDHDNQREMKVLKRAEGDGEGFIVIDDLVDTGGTAKAIRDMYPKAHFVTIFAKPAGKPLVDDYVIDIPQDTWIEQPWDMGVVFVPPLSGR.

Residues 37 to 38 (RG), R69, and 88 to 96 (DDLVDTGGT) each bind 5-phospho-alpha-D-ribose 1-diphosphate. Residue R69 coordinates GMP. Residue D89 coordinates Mg(2+). The guanine site is built by D92 and I135. Xanthine is bound by residues D92 and I135. GMP is bound by residues 92–96 (DTGGT) and 134–135 (WI).

It belongs to the purine/pyrimidine phosphoribosyltransferase family. XGPT subfamily. Homotetramer. It depends on Mg(2+) as a cofactor.

The protein resides in the cell inner membrane. It catalyses the reaction GMP + diphosphate = guanine + 5-phospho-alpha-D-ribose 1-diphosphate. The enzyme catalyses XMP + diphosphate = xanthine + 5-phospho-alpha-D-ribose 1-diphosphate. The catalysed reaction is IMP + diphosphate = hypoxanthine + 5-phospho-alpha-D-ribose 1-diphosphate. Its pathway is purine metabolism; GMP biosynthesis via salvage pathway; GMP from guanine: step 1/1. It functions in the pathway purine metabolism; XMP biosynthesis via salvage pathway; XMP from xanthine: step 1/1. Functionally, purine salvage pathway enzyme that catalyzes the transfer of the ribosyl-5-phosphate group from 5-phospho-alpha-D-ribose 1-diphosphate (PRPP) to the N9 position of the 6-oxopurines guanine and xanthine to form the corresponding ribonucleotides GMP (guanosine 5'-monophosphate) and XMP (xanthosine 5'-monophosphate), with the release of PPi. To a lesser extent, also acts on hypoxanthine. This chain is Xanthine-guanine phosphoribosyltransferase, found in Pectobacterium carotovorum subsp. carotovorum (strain PC1).